The chain runs to 180 residues: Isopentenyl-diphosphate Delta-isomerase (180 aa).

Mn(2+)-binding residues include His-26 and His-32. In terms of domain architecture, Nudix hydrolase spans 30–168 (ALHLAFSVLL…PELFTAWFPQ (139 aa)). Cys-70 is an active-site residue. Cys-70 serves as a coordination point for Mg(2+). His-72 contacts Mn(2+). Residue Glu-90 coordinates Mg(2+). Mn(2+) contacts are provided by Glu-117 and Glu-119. The active site involves Glu-119.

Belongs to the IPP isomerase type 1 family. Mg(2+) is required as a cofactor. Mn(2+) serves as cofactor.

It localises to the cytoplasm. It catalyses the reaction isopentenyl diphosphate = dimethylallyl diphosphate. It participates in isoprenoid biosynthesis; dimethylallyl diphosphate biosynthesis; dimethylallyl diphosphate from isopentenyl diphosphate: step 1/1. Catalyzes the 1,3-allylic rearrangement of the homoallylic substrate isopentenyl (IPP) to its highly electrophilic allylic isomer, dimethylallyl diphosphate (DMAPP). The sequence is that of Isopentenyl-diphosphate Delta-isomerase from Photobacterium profundum (strain SS9).